We begin with the raw amino-acid sequence, 100 residues long: Urease subunit gamma (100 aa).

It belongs to the urease gamma subunit family. As to quaternary structure, heterotrimer of UreA (gamma), UreB (beta) and UreC (alpha) subunits. Three heterotrimers associate to form the active enzyme.

The protein localises to the cytoplasm. It catalyses the reaction urea + 2 H2O + H(+) = hydrogencarbonate + 2 NH4(+). It participates in nitrogen metabolism; urea degradation; CO(2) and NH(3) from urea (urease route): step 1/1. The sequence is that of Urease subunit gamma from Yersinia rohdei.